An 855-amino-acid polypeptide reads, in one-letter code: Cytosolic phospholipase A2 zeta (855 aa).

The C2 domain occupies 27 to 145 (EKSEPQWKHR…QLGQPCTKNF (119 aa)). 5 residues coordinate Ca(2+): Asp-60, Asp-66, Asp-116, Asp-118, and Asp-123. Positions 304 to 855 (MSSSGDLDLR…RRQAGGRVGG (552 aa)) constitute a PLA2c domain. The Nucleophile role is filled by Ser-393. Asp-685 functions as the Proton acceptor in the catalytic mechanism.

Requires Ca(2+) as cofactor. In terms of tissue distribution, strongly expressed in thyroid, expressed at intermediate level in stomach and at very low level in large intestine and prostate.

Its subcellular location is the cytoplasm. The protein localises to the cytosol. The protein resides in the cell membrane. It is found in the mitochondrion. It catalyses the reaction a 1,2-diacyl-sn-glycero-3-phosphocholine + H2O = a 1-acyl-sn-glycero-3-phosphocholine + a fatty acid + H(+). The enzyme catalyses a 1-O-alkyl-2-acyl-sn-glycero-3-phosphocholine + H2O = a 1-O-alkyl-sn-glycero-3-phosphocholine + a fatty acid + H(+). The catalysed reaction is 1-hexadecanoyl-2-(9Z-octadecenoyl)-sn-glycero-3-phosphocholine + H2O = 2-(9Z-octadecenoyl)-sn-glycero-3-phosphocholine + hexadecanoate + H(+). It carries out the reaction 1-hexadecanoyl-2-(9Z,12Z-octadecadienoyl)-sn-glycero-3-phosphocholine + H2O = (9Z,12Z)-octadecadienoate + 1-hexadecanoyl-sn-glycero-3-phosphocholine + H(+). It catalyses the reaction 1-hexadecanoyl-2-(5Z,8Z,11Z,14Z-eicosatetraenoyl)-sn-glycero-3-phosphocholine + H2O = 1-hexadecanoyl-sn-glycero-3-phosphocholine + (5Z,8Z,11Z,14Z)-eicosatetraenoate + H(+). The enzyme catalyses 1-hexadecanoyl-2-(9Z,12Z-octadecadienoyl)-sn-glycero-3-phosphoethanolamine + H2O = 1-hexadecanoyl-sn-glycero-3-phosphoethanolamine + (9Z,12Z)-octadecadienoate + H(+). The catalysed reaction is 1-hexadecanoyl-2-(5Z,8Z,11Z,14Z-eicosatetraenoyl)-sn-glycero-3-phosphoethanolamine + H2O = 1-hexadecanoyl-sn-glycero-3-phosphoethanolamine + (5Z,8Z,11Z,14Z)-eicosatetraenoate + H(+). It carries out the reaction 1-(5Z,8Z,11Z,14Z-eicosatetraenoyl)-2-O-hexadecyl-sn-glycero-3-phosphocholine + H2O = 2-O-hexadecyl-sn-glycero-3-phosphocholine + (5Z,8Z,11Z,14Z)-eicosatetraenoate + H(+). It catalyses the reaction 1-O-hexadecyl-2-(5Z,8Z,11Z,14Z)-eicosatetraenoyl-sn-glycero-3-phosphocholine + H2O = 1-O-hexadecyl-sn-glycero-3-phosphocholine + (5Z,8Z,11Z,14Z)-eicosatetraenoate + H(+). The enzyme catalyses 1-hexadecanoyl-sn-glycero-3-phosphocholine + H2O = sn-glycerol 3-phosphocholine + hexadecanoate + H(+). Stimulated by cytosolic Ca(2+). Has calcium-dependent phospholipase and lysophospholipase activities with a potential role in membrane lipid remodeling and biosynthesis of lipid mediators. Preferentially hydrolyzes the ester bond of the fatty acyl group attached at sn-2 position of phospholipids (phospholipase A2 activity). Selectively hydrolyzes sn-2 arachidonoyl group from membrane phospholipids, providing the precursor for eicosanoid biosynthesis. In myocardial mitochondria, plays a major role in arachidonate release that is metabolically channeled to the formation of cardioprotective eicosanoids, epoxyeicosatrienoates (EETs). This is Cytosolic phospholipase A2 zeta (Pla2g4f) from Mus musculus (Mouse).